The primary structure comprises 398 residues: Elongation factor Tu (398 aa).

The 198-residue stretch at 10 to 207 (KPHVNIGTIG…TVDEYIPEPE (198 aa)) folds into the tr-type G domain. The interval 19–26 (GHVDHGKT) is G1. 19 to 26 (GHVDHGKT) lines the GTP pocket. Thr-26 provides a ligand contact to Mg(2+). The segment at 63–67 (GITIN) is G2. The segment at 84–87 (DAPG) is G3. GTP is bound by residues 84–88 (DAPGH) and 139–142 (NKVD). Positions 139–142 (NKVD) are G4. The segment at 177 to 179 (SAL) is G5.

It belongs to the TRAFAC class translation factor GTPase superfamily. Classic translation factor GTPase family. EF-Tu/EF-1A subfamily. As to quaternary structure, monomer.

It is found in the cytoplasm. The catalysed reaction is GTP + H2O = GDP + phosphate + H(+). In terms of biological role, GTP hydrolase that promotes the GTP-dependent binding of aminoacyl-tRNA to the A-site of ribosomes during protein biosynthesis. The chain is Elongation factor Tu from Streptococcus thermophilus (strain CNRZ 1066).